A 433-amino-acid polypeptide reads, in one-letter code: Tyrosine--tRNA ligase (433 aa).

An L-tyrosine-binding site is contributed by tyrosine 34. The short motif at 39–48 (PTASSLHVGS) is the 'HIGH' region element. Residues tyrosine 169 and glutamine 173 each coordinate L-tyrosine. Residues 229–233 (KMGKT) carry the 'KMSKS' region motif. ATP is bound at residue lysine 232. The S4 RNA-binding domain occupies 364 to 432 (IPAFVLFHTV…RYHTIVVRKG (69 aa)).

The protein belongs to the class-I aminoacyl-tRNA synthetase family. TyrS type 1 subfamily. In terms of assembly, homodimer.

The protein resides in the cytoplasm. It catalyses the reaction tRNA(Tyr) + L-tyrosine + ATP = L-tyrosyl-tRNA(Tyr) + AMP + diphosphate + H(+). Its function is as follows. Catalyzes the attachment of tyrosine to tRNA(Tyr) in a two-step reaction: tyrosine is first activated by ATP to form Tyr-AMP and then transferred to the acceptor end of tRNA(Tyr). This chain is Tyrosine--tRNA ligase, found in Desulfosudis oleivorans (strain DSM 6200 / JCM 39069 / Hxd3) (Desulfococcus oleovorans).